A 367-amino-acid polypeptide reads, in one-letter code: tRNA 2-selenouridine synthase (367 aa).

In terms of domain architecture, Rhodanese spans 12–135 (FLSGVAMLDV…MRGFLIETTD (124 aa)). Residue C95 is the S-selanylcysteine intermediate of the active site.

The protein belongs to the SelU family. In terms of assembly, monomer.

The enzyme catalyses 5-methylaminomethyl-2-thiouridine(34) in tRNA + selenophosphate + (2E)-geranyl diphosphate + H2O + H(+) = 5-methylaminomethyl-2-selenouridine(34) in tRNA + (2E)-thiogeraniol + phosphate + diphosphate. The catalysed reaction is 5-methylaminomethyl-2-thiouridine(34) in tRNA + (2E)-geranyl diphosphate = 5-methylaminomethyl-S-(2E)-geranyl-thiouridine(34) in tRNA + diphosphate. It catalyses the reaction 5-methylaminomethyl-S-(2E)-geranyl-thiouridine(34) in tRNA + selenophosphate + H(+) = 5-methylaminomethyl-2-(Se-phospho)selenouridine(34) in tRNA + (2E)-thiogeraniol. It carries out the reaction 5-methylaminomethyl-2-(Se-phospho)selenouridine(34) in tRNA + H2O = 5-methylaminomethyl-2-selenouridine(34) in tRNA + phosphate. In terms of biological role, involved in the post-transcriptional modification of the uridine at the wobble position (U34) of tRNA(Lys), tRNA(Glu) and tRNA(Gln). Catalyzes the conversion of 2-thiouridine (S2U-RNA) to 2-selenouridine (Se2U-RNA). Acts in a two-step process involving geranylation of 2-thiouridine (S2U) to S-geranyl-2-thiouridine (geS2U) and subsequent selenation of the latter derivative to 2-selenouridine (Se2U) in the tRNA chain. The polypeptide is tRNA 2-selenouridine synthase (Cupriavidus necator (strain ATCC 17699 / DSM 428 / KCTC 22496 / NCIMB 10442 / H16 / Stanier 337) (Ralstonia eutropha)).